Consider the following 241-residue polypeptide: Queuine tRNA-ribosyltransferase-like protein (241 aa).

This sequence belongs to the queuine tRNA-ribosyltransferase family.

This is Queuine tRNA-ribosyltransferase-like protein from Plasmodium falciparum.